Here is a 300-residue protein sequence, read N- to C-terminus: Porphobilinogen deaminase (300 aa).

S-(dipyrrolylmethanemethyl)cysteine is present on C241.

It belongs to the HMBS family. Monomer. Dipyrromethane serves as cofactor.

The catalysed reaction is 4 porphobilinogen + H2O = hydroxymethylbilane + 4 NH4(+). Its pathway is porphyrin-containing compound metabolism; protoporphyrin-IX biosynthesis; coproporphyrinogen-III from 5-aminolevulinate: step 2/4. Tetrapolymerization of the monopyrrole PBG into the hydroxymethylbilane pre-uroporphyrinogen in several discrete steps. The sequence is that of Porphobilinogen deaminase from Sorangium cellulosum (strain So ce56) (Polyangium cellulosum (strain So ce56)).